Reading from the N-terminus, the 387-residue chain is Phosphoglycerate kinase (387 aa).

Substrate-binding positions include 21 to 23 (DLN), arginine 36, 59 to 62 (HLGR), arginine 113, and arginine 146. ATP-binding positions include lysine 197, glutamate 314, and 340 to 343 (GGDT).

It belongs to the phosphoglycerate kinase family. In terms of assembly, monomer.

Its subcellular location is the cytoplasm. It carries out the reaction (2R)-3-phosphoglycerate + ATP = (2R)-3-phospho-glyceroyl phosphate + ADP. It participates in carbohydrate degradation; glycolysis; pyruvate from D-glyceraldehyde 3-phosphate: step 2/5. The sequence is that of Phosphoglycerate kinase from Pseudomonas entomophila (strain L48).